Here is an 801-residue protein sequence, read N- to C-terminus: tRNA(Met) cytidine acetyltransferase TmcA (801 aa).

ATP contacts are provided by residues glutamine 228, 256–265 (GRGKSSAVGL), and arginine 412. One can recognise an N-acetyltransferase domain in the interval 457–637 (EELFLKNEEE…YTVIVVKPLS (181 aa)). Acetyl-CoA-binding positions include 562–564 (IAT), 569–575 (MGKGLGS), and glutamate 602.

The protein belongs to the RNA cytidine acetyltransferase family. TmcA subfamily.

It localises to the cytoplasm. The catalysed reaction is cytidine(34) in elongator tRNA(Met) + acetyl-CoA + ATP + H2O = N(4)-acetylcytidine(34) in elongator tRNA(Met) + ADP + phosphate + CoA + H(+). Functionally, catalyzes the formation of N(4)-acetylcytidine (ac(4)C) at the wobble position of tRNA(Met), by using acetyl-CoA as an acetyl donor and ATP (or GTP). This chain is tRNA(Met) cytidine acetyltransferase TmcA, found in Thermofilum pendens (strain DSM 2475 / Hrk 5).